We begin with the raw amino-acid sequence, 216 residues long: Small ribosomal subunit protein uS3c (216 aa).

In terms of domain architecture, KH type-2 spans 43 to 118 (IKNYIQKNRR…KLNIAIVKVT (76 aa)).

Belongs to the universal ribosomal protein uS3 family. Part of the 30S ribosomal subunit.

The protein localises to the plastid. It localises to the chloroplast. The sequence is that of Small ribosomal subunit protein uS3c (rps3) from Phaseolus angularis (Azuki bean).